The primary structure comprises 272 residues: Formamidopyrimidine-DNA glycosylase (272 aa).

The Schiff-base intermediate with DNA role is filled by Pro2. Glu3 (proton donor) is an active-site residue. Residue Lys58 is the Proton donor; for beta-elimination activity of the active site. Residues His91, Arg111, and Arg153 each contribute to the DNA site. An FPG-type zinc finger spans residues Ala238–Ser272. Arg262 (proton donor; for delta-elimination activity) is an active-site residue.

The protein belongs to the FPG family. Monomer. Zn(2+) serves as cofactor.

The enzyme catalyses Hydrolysis of DNA containing ring-opened 7-methylguanine residues, releasing 2,6-diamino-4-hydroxy-5-(N-methyl)formamidopyrimidine.. It carries out the reaction 2'-deoxyribonucleotide-(2'-deoxyribose 5'-phosphate)-2'-deoxyribonucleotide-DNA = a 3'-end 2'-deoxyribonucleotide-(2,3-dehydro-2,3-deoxyribose 5'-phosphate)-DNA + a 5'-end 5'-phospho-2'-deoxyribonucleoside-DNA + H(+). Its function is as follows. Involved in base excision repair of DNA damaged by oxidation or by mutagenic agents. Acts as a DNA glycosylase that recognizes and removes damaged bases. Has a preference for oxidized purines, such as 7,8-dihydro-8-oxoguanine (8-oxoG). Has AP (apurinic/apyrimidinic) lyase activity and introduces nicks in the DNA strand. Cleaves the DNA backbone by beta-delta elimination to generate a single-strand break at the site of the removed base with both 3'- and 5'-phosphates. This Marinomonas sp. (strain MWYL1) protein is Formamidopyrimidine-DNA glycosylase.